The sequence spans 448 residues: Lipoamide acyltransferase component of branched-chain alpha-keto acid dehydrogenase complex, mitochondrial (448 aa).

In terms of domain architecture, Lipoyl-binding spans 30–105 (VVQFKLSDIG…RVGQALIDVE (76 aa)). Lysine 71 bears the N6-lipoyllysine mark. Disordered stretches follow at residues 108-146 (GNVE…GKVL) and 191-211 (TSGS…SKSY). Low complexity predominate over residues 121–136 (ASSSPEAPKSSAPKAP). The Peripheral subunit-binding (PSBD) domain occupies 146-183 (LATPAVRRIAIENKIKLAEVRGTGKDGRVLKEDVLKFL). Residues 191–210 (TSGSTNIRTTHQAPQPSSKS) show a composition bias toward polar residues. Residues arginine 257, serine 272, aspartate 315, serine 365, asparagine 366, glycine 390, and isoleucine 392 each coordinate CoA. Residues histidine 418 and aspartate 422 contribute to the active site.

Belongs to the 2-oxoacid dehydrogenase family. Requires (R)-lipoate as cofactor. As to expression, ubiquitously expressed.

The protein resides in the mitochondrion matrix. It is found in the cytoplasm. Its subcellular location is the cytosol. The protein localises to the cell projection. It localises to the dendrite. The protein resides in the cilium. It carries out the reaction N(6)-[(R)-dihydrolipoyl]-L-lysyl-[protein] + 2-methylpropanoyl-CoA = N(6)-[(R)-S(8)-2-methylpropanoyldihydrolipoyl]-L-lysyl-[protein] + CoA. The branched-chain alpha-keto dehydrogenase complex catalyzes the overall conversion of alpha-keto acids to acyl-CoA and CO(2). It contains multiple copies of three enzymatic components: branched-chain alpha-keto acid decarboxylase (E1), lipoamide acyltransferase (E2) and lipoamide dehydrogenase (E3). Within this complex, the catalytic function of this enzyme is to accept, and to transfer to coenzyme A, acyl groups that are generated by the branched-chain alpha-keto acid decarboxylase component. Required for the catabolism of branched-chain amino acids and the subsequent synthesis of monomethyl branched-chain fatty acids, which are important for regulating postembryonic growth. The polypeptide is Lipoamide acyltransferase component of branched-chain alpha-keto acid dehydrogenase complex, mitochondrial (Caenorhabditis elegans).